Reading from the N-terminus, the 686-residue chain is Rhophilin-2 (686 aa).

The REM-1 domain maps to 26–100 (NPLAQTGRSK…LEGLNISVGV (75 aa)). The tract at residues 46-66 (QILKAVRMRTGAENLLKVATN) is interaction with Rho. Positions 111 to 502 (PLIPLGLKET…TDFFQKLGPL (392 aa)) constitute a BRO1 domain. In terms of domain architecture, PDZ spans 515 to 593 (RGIHFTVEEG…EEVEMKVVSL (79 aa)). Threonine 655 carries the phosphothreonine modification.

The protein belongs to the RHPN family. Interacts with GTP-bound RhoA and RhoB. Interacts with both GTP- and GDP-bound RhoA. Interacts with KRT18.

It is found in the cytoplasm. The protein localises to the perinuclear region. Binds specifically to GTP-Rho. May function in a Rho pathway to limit stress fiber formation and/or increase the turnover of F-actin structures in the absence of high levels of RhoA activity. This is Rhophilin-2 (Rhpn2) from Mus musculus (Mouse).